The following is a 400-amino-acid chain: Ribosomal RNA large subunit methyltransferase I (400 aa).

Residues 6 to 84 (FPRLVLAKGR…NEAIDSAFFE (79 aa)) form the PUA domain.

This sequence belongs to the methyltransferase superfamily. RlmI family.

It is found in the cytoplasm. It carries out the reaction cytidine(1962) in 23S rRNA + S-adenosyl-L-methionine = 5-methylcytidine(1962) in 23S rRNA + S-adenosyl-L-homocysteine + H(+). Functionally, specifically methylates the cytosine at position 1962 (m5C1962) of 23S rRNA. In Klebsiella pneumoniae subsp. pneumoniae (strain ATCC 700721 / MGH 78578), this protein is Ribosomal RNA large subunit methyltransferase I.